A 189-amino-acid chain; its full sequence is Dynactin subunit 6 (189 aa).

The protein belongs to the dynactin subunits 5/6 family. Dynactin subunit 6 subfamily. In terms of assembly, subunit of dynactin, a multiprotein complex part of a tripartite complex with dynein and a adapter, such as BICDL1, BICD2 or HOOK3. The dynactin complex is built around ACTR1A/ACTB filament and consists of an actin-related filament composed of a shoulder domain, a pointed end and a barbed end.

It localises to the cytoplasm. Its subcellular location is the cytoskeleton. Functionally, part of the dynactin complex that activates the molecular motor dynein for ultra-processive transport along microtubules. This Dictyostelium discoideum (Social amoeba) protein is Dynactin subunit 6 (dynF).